A 100-amino-acid polypeptide reads, in one-letter code: Protein translation factor SUI1 homolog (100 aa).

It belongs to the SUI1 family.

The chain is Protein translation factor SUI1 homolog from Sulfurisphaera tokodaii (strain DSM 16993 / JCM 10545 / NBRC 100140 / 7) (Sulfolobus tokodaii).